The primary structure comprises 251 residues: ATP synthase subunit a (251 aa).

7 helical membrane-spanning segments follow: residues phenylalanine 28–leucine 48, leucine 63–glycine 80, phenylalanine 86–phenylalanine 106, histidine 115–leucine 135, alanine 154–isoleucine 176, phenylalanine 195–methionine 215, and valine 219–leucine 239.

This sequence belongs to the ATPase A chain family. As to quaternary structure, F-type ATPases have 2 components, CF(1) - the catalytic core - and CF(0) - the membrane proton channel. CF(1) has five subunits: alpha(3), beta(3), gamma(1), delta(1), epsilon(1). CF(0) has three main subunits: a(1), b(2) and c(9-12). The alpha and beta chains form an alternating ring which encloses part of the gamma chain. CF(1) is attached to CF(0) by a central stalk formed by the gamma and epsilon chains, while a peripheral stalk is formed by the delta and b chains.

Its subcellular location is the cell inner membrane. Key component of the proton channel; it plays a direct role in the translocation of protons across the membrane. This is ATP synthase subunit a from Granulibacter bethesdensis (strain ATCC BAA-1260 / CGDNIH1).